The chain runs to 402 residues: Phosphoglycerate kinase (402 aa).

Substrate contacts are provided by residues 21 to 23 (DLN), Arg-36, 59 to 62 (HLGR), Arg-114, and Arg-147. ATP is bound by residues Lys-202, Glu-329, and 355 to 358 (GGDT).

This sequence belongs to the phosphoglycerate kinase family. In terms of assembly, monomer.

The protein resides in the cytoplasm. It carries out the reaction (2R)-3-phosphoglycerate + ATP = (2R)-3-phospho-glyceroyl phosphate + ADP. The protein operates within carbohydrate degradation; glycolysis; pyruvate from D-glyceraldehyde 3-phosphate: step 2/5. The chain is Phosphoglycerate kinase from Psychrobacter sp. (strain PRwf-1).